A 315-amino-acid polypeptide reads, in one-letter code: Calumenin (315 aa).

Residues M1 to S19 form the signal peptide. Residue Y47 is modified to Phosphotyrosine. Residue T65 is modified to Phosphothreonine. EF-hand domains lie at E68–R103, W104–D139, Q151–D186, M188–N223, W229–D264, and H265–S300. S69 is modified (phosphoserine). Positions 81, 83, 85, 92, 117, 119, 121, and 128 each coordinate Ca(2+). N131 is a glycosylation site (N-linked (GlcNAc...) asparagine). A Ca(2+)-binding site is contributed by D164. N6-acetyllysine is present on K165. Residues D166, D168, E175, D201, N203, D205, E212, D242, N244, D246, R248, and E253 each coordinate Ca(2+). T254 carries the post-translational modification Phosphothreonine. 2 positions are modified to phosphoserine: S261 and S277. D278, N280, D282, K284, and E289 together coordinate Ca(2+). A Prevents secretion from ER motif is present at residues H312–F315.

The protein belongs to the CREC family. Interacts with GGCX.

Its subcellular location is the endoplasmic reticulum membrane. The protein resides in the golgi apparatus. It is found in the secreted. It localises to the melanosome. The protein localises to the sarcoplasmic reticulum lumen. Its function is as follows. Involved in regulation of vitamin K-dependent carboxylation of multiple N-terminal glutamate residues. Seems to inhibit gamma-carboxylase GGCX. Binds 7 calcium ions with a low affinity. The sequence is that of Calumenin (CALU) from Mesocricetus auratus (Golden hamster).